Here is a 253-residue protein sequence, read N- to C-terminus: GTP cyclohydrolase III (253 aa).

Belongs to the archaeal-type GTP cyclohydrolase family.

The catalysed reaction is GTP + 3 H2O = 2-amino-5-formylamino-6-(5-phospho-D-ribosylamino)pyrimidin-4(3H)-one + 2 phosphate + 2 H(+). Catalyzes the formation of 2-amino-5-formylamino-6-ribofuranosylamino-4(3H)-pyrimidinone ribonucleotide monophosphate and inorganic phosphate from GTP. Also has an independent pyrophosphate phosphohydrolase activity. The polypeptide is GTP cyclohydrolase III (Natronomonas pharaonis (strain ATCC 35678 / DSM 2160 / CIP 103997 / JCM 8858 / NBRC 14720 / NCIMB 2260 / Gabara) (Halobacterium pharaonis)).